A 319-amino-acid polypeptide reads, in one-letter code: tRNA dimethylallyltransferase (319 aa).

Residue 26–33 (GPTAAGKS) coordinates ATP. 28-33 (TAAGKS) lines the substrate pocket. The segment at 51–54 (DSMQ) is interaction with substrate tRNA.

This sequence belongs to the IPP transferase family. As to quaternary structure, monomer. The cofactor is Mg(2+).

The catalysed reaction is adenosine(37) in tRNA + dimethylallyl diphosphate = N(6)-dimethylallyladenosine(37) in tRNA + diphosphate. Its function is as follows. Catalyzes the transfer of a dimethylallyl group onto the adenine at position 37 in tRNAs that read codons beginning with uridine, leading to the formation of N6-(dimethylallyl)adenosine (i(6)A). This is tRNA dimethylallyltransferase from Salinispora tropica (strain ATCC BAA-916 / DSM 44818 / JCM 13857 / NBRC 105044 / CNB-440).